We begin with the raw amino-acid sequence, 1488 residues long: Chromosome partition protein MukB (1488 aa).

34–41 contacts ATP; the sequence is GGNGAGKS. Coiled-coil stretches lie at residues 326-418, 444-472, and 509-602; these read LEAD…QYNQ, LDTF…QTAH, and RHLA…QRAP. The interval 666–783 is flexible hinge; that stretch reads PGGAEDQRLN…SLPIFGRAAR (118 aa). Coiled-coil stretches lie at residues 835–923, 977–1116, and 1209–1265; these read EAEI…AKLE, EMLS…AKAG, and VEAI…LQSV. The tract at residues 1049 to 1074 is disordered; it reads ADSGAEERARQRRDELHAQLSNNRSR. A compositionally biased stretch (basic and acidic residues) spans 1051-1065; it reads SGAEERARQRRDELH.

The protein belongs to the SMC family. MukB subfamily. In terms of assembly, homodimerization via its hinge domain. Binds to DNA via its C-terminal region. Interacts, and probably forms a ternary complex, with MukE and MukF via its C-terminal region. The complex formation is stimulated by calcium or magnesium. Interacts with tubulin-related protein FtsZ.

The protein localises to the cytoplasm. It localises to the nucleoid. Functionally, plays a central role in chromosome condensation, segregation and cell cycle progression. Functions as a homodimer, which is essential for chromosome partition. Involved in negative DNA supercoiling in vivo, and by this means organize and compact chromosomes. May achieve or facilitate chromosome segregation by condensation DNA from both sides of a centrally located replisome during cell division. The polypeptide is Chromosome partition protein MukB (Salmonella schwarzengrund (strain CVM19633)).